We begin with the raw amino-acid sequence, 401 residues long: 8-amino-7-oxononanoate synthase (401 aa).

R24 contacts substrate. 111 to 112 provides a ligand contact to pyridoxal 5'-phosphate; sequence GF. H137 contributes to the substrate binding site. Positions 183, 211, and 240 each coordinate pyridoxal 5'-phosphate. K243 carries the post-translational modification N6-(pyridoxal phosphate)lysine. Residue T357 coordinates substrate.

It belongs to the class-II pyridoxal-phosphate-dependent aminotransferase family. BioF subfamily. As to quaternary structure, homodimer. Requires pyridoxal 5'-phosphate as cofactor.

The enzyme catalyses 6-carboxyhexanoyl-[ACP] + L-alanine + H(+) = (8S)-8-amino-7-oxononanoate + holo-[ACP] + CO2. Its pathway is cofactor biosynthesis; biotin biosynthesis. Its function is as follows. Catalyzes the decarboxylative condensation of pimeloyl-[acyl-carrier protein] and L-alanine to produce 8-amino-7-oxononanoate (AON), [acyl-carrier protein], and carbon dioxide. This is 8-amino-7-oxononanoate synthase from Xanthomonas axonopodis pv. citri (strain 306).